We begin with the raw amino-acid sequence, 537 residues long: Glucose-6-phosphate isomerase (537 aa).

Glu355 functions as the Proton donor in the catalytic mechanism. Catalysis depends on residues His386 and Lys501.

It belongs to the GPI family.

It localises to the cytoplasm. It catalyses the reaction alpha-D-glucose 6-phosphate = beta-D-fructose 6-phosphate. The protein operates within carbohydrate biosynthesis; gluconeogenesis. Its pathway is carbohydrate degradation; glycolysis; D-glyceraldehyde 3-phosphate and glycerone phosphate from D-glucose: step 2/4. Its function is as follows. Catalyzes the reversible isomerization of glucose-6-phosphate to fructose-6-phosphate. This chain is Glucose-6-phosphate isomerase, found in Protochlamydia amoebophila (strain UWE25).